The sequence spans 851 residues: MAKPLTDQEKRRQISIRGIVGVENVAELKKGFNRHLHFTLVKDRNVATPRDYFFALAHTVRDHLVGRWIRTQQYYYEKCPKRVYYLSLEFYMGRTLQNTMINLGLQNACDEAIYQLGLDMEELEEIEEDAGLGNGGLGRLAACFLDSMATLGLAAYGYGIRYEYGIFNQKIRDGWQIEEADDWLRHGNPWEKARPEFMLPVHFYGRVEHTEAGTKWTDTQVVLALPYDTPVPGYLNNTVNTMRLWSARAPNDFNLRDFNVGDYIQAVLDRNLAENISRVLYPNDNFFEGKELRLKQEYFVVAATLQDVIRRFKASKFDSSNSTKTAFDAFPDQVAIQLNDTHPSLAIPELMRIFVDIEKLPWSKAWEITQKTFAYTNHTVLPEALERWPVELVEKLLPRHLQIIYEINQKHLDKIAALFPKDVDRLRRMSLIEEEGGKRINMAHLCIVGSHAVNGVAKIHSDIVKTQVFKDFSELEPDKFQNKTNGITPRRWLLLCNPGLAELIAEKIGEDYVKDLSQLTKLNSFLGDDIFLREISNVKQENKLKFSQFLEKEYKVKINPSSMFDVQVKRIHEYKRQLLNCLHVVTMYNRIKKDPKKLFVPRTVIIGGKAAPGYYMAKLIIKLITSVAEVVNNDPVVGSKLKLIFLENYRVSLAEKVIPATDLSEQISTAGTEASGTGNMKFMLNGALTIGTMDGANVEMAEEAGEENLFIFGMRIEDVAALDKKGYEAKEYYEALPELKLAIDQIDKGFFSPKQPDLFKDLVNMLFYHDRFKVFADYEAYVKCQEKVSQLYMNPKAWNIMVLKNIAASGKFSSDRTIKEYARDIWNMEPSDIKISLSSDPSGGANKANGK.

Alanine 2 carries the N-acetylalanine modification. A Phosphoserine; by PHK; in form phosphorylase a modification is found at serine 15. Residues 43–45 (DRN), tyrosine 76, and arginine 310 each bind AMP. Lysine 364 carries the N6-succinyllysine modification. Lysine 470 is modified (N6-acetyllysine). Phosphoserine is present on residues serine 524, serine 561, and serine 639. Lysine 681 carries the post-translational modification N6-(pyridoxal phosphate)lysine. Lysine 796 carries the N6-acetyllysine modification.

The protein belongs to the glycogen phosphorylase family. Homodimer; enzymatically active. Interacts with PPP1R3B; recruits the phosphatase PP1 which dephosphorylates and inactivates PYGL/glycogen phosphorylase. Pyridoxal 5'-phosphate is required as a cofactor. Post-translationally, acetylation, which is up-regulated by glucose and insulin and down-regulated by glucagon, inhibits the glycogen phosphorylase activity by promoting PPP1R3B-mediated recruitment of phosphatase PP1 and Ser-15 dephosphorylation. Phosphorylation at Ser-15 converts inactive phosphorylase b into active phosphorylase a. Dephosphorylation of Ser-15 by phosphatase PP1 inactivates the enzyme.

It localises to the cytoplasm. The protein localises to the cytosol. It carries out the reaction [(1-&gt;4)-alpha-D-glucosyl](n) + phosphate = [(1-&gt;4)-alpha-D-glucosyl](n-1) + alpha-D-glucose 1-phosphate. Allosterically regulated through the non-covalent binding of metabolites, being activated by AMP and inhibited by ATP, ADP, and glucose-6-phosphate. The activity is also controlled by post-translational modifications including phosphorylation and acetylation. Functionally, allosteric enzyme that catalyzes the rate-limiting step in glycogen catabolism, the phosphorolytic cleavage of glycogen to produce glucose-1-phosphate, and plays a central role in maintaining cellular and organismal glucose homeostasis. The chain is Glycogen phosphorylase, liver form from Bos taurus (Bovine).